The following is a 212-amino-acid chain: Large ribosomal subunit protein uL3 (212 aa).

A disordered region spans residues 129–156 (RRGPMGHGSKNHRAPGSTGAGTTPGRIY). Positions 142–153 (APGSTGAGTTPG) are enriched in low complexity.

Belongs to the universal ribosomal protein uL3 family. In terms of assembly, part of the 50S ribosomal subunit. Forms a cluster with proteins L14 and L19.

Its function is as follows. One of the primary rRNA binding proteins, it binds directly near the 3'-end of the 23S rRNA, where it nucleates assembly of the 50S subunit. The protein is Large ribosomal subunit protein uL3 of Acaryochloris marina (strain MBIC 11017).